The primary structure comprises 85 residues: UPF0291 protein SAK_0343 (85 aa).

Residues 58–85 (GNDVTPEKLRQVQREKGLHGRSLDDPNS) form a disordered region. Positions 62–85 (TPEKLRQVQREKGLHGRSLDDPNS) are enriched in basic and acidic residues.

This sequence belongs to the UPF0291 family.

It localises to the cytoplasm. This chain is UPF0291 protein SAK_0343, found in Streptococcus agalactiae serotype Ia (strain ATCC 27591 / A909 / CDC SS700).